Reading from the N-terminus, the 662-residue chain is Protein Aster-C (662 aa).

The interval 1 to 34 (MEGAPTVRQVMNEGDSSLATDLQEDVEENPSPTV) is disordered. One can recognise a GRAM domain in the interval 69–136 (EEYRRQFTHL…KNITFMTKEK (68 aa)). Disordered stretches follow at residues 212–237 (SIED…EKLS) and 249–284 (RVSE…LPTL). The span at 265–276 (LGKEESQNEKQT) shows a compositional bias: basic and acidic residues. In terms of domain architecture, VASt spans 326 to 497 (HGRLFINRIF…DLLIEESVLN (172 aa)). A helical transmembrane segment spans residues 557–577 (LIVVMSIFVLLLVLLNVTLFL).

The protein localises to the endoplasmic reticulum membrane. The protein resides in the cell membrane. In terms of biological role, cholesterol transporter that mediates non-vesicular transport of cholesterol from the plasma membrane (PM) to the endoplasmic reticulum (ER). Contains unique domains for binding cholesterol and the PM, thereby serving as a molecular bridge for the transfer of cholesterol from the PM to the ER. Plays a crucial role in cholesterol homeostasis and has the unique ability to localize to the PM based on the level of membrane cholesterol. In lipid-poor conditions localizes to the ER membrane and in response to excess cholesterol in the PM is recruited to the endoplasmic reticulum-plasma membrane contact sites (EPCS) which is mediated by the GRAM domain. At the EPCS, the sterol-binding VASt/ASTER domain binds to the cholesterol in the PM and facilitates its transfer from the PM to ER. This is Protein Aster-C (GRAMD1C) from Homo sapiens (Human).